We begin with the raw amino-acid sequence, 68 residues long: Glu S.griseus protease inhibitor (68 aa).

Ser-1 carries the post-translational modification N-acetylserine. Cys-3 and Cys-48 are joined by a disulfide.

It belongs to the protease inhibitor I13 (potato type I serine protease inhibitor) family.

Its function is as follows. Competitively inhibits Glu S.griseus protease by forming probably a 1:1 complex. BGIA has no inhibitory activity against 2 other acidic amino acid-specific endopeptidases (S.aureus protease V8 and B.subtilis proteinase), chymotrypsin, trypsin, pancreatic elastase, and papain, although subtilisin Carlsberg was strongly inhibited. This is Glu S.griseus protease inhibitor from Momordica charantia (Bitter gourd).